Reading from the N-terminus, the 379-residue chain is GDSL esterase/lipase EXL2 (379 aa).

The N-terminal stretch at 1 to 35 (MKRNSINIHHVTSFSSSPFWCVFFLVLLCKTSTNA) is a signal peptide. A glycan (N-linked (GlcNAc...) asparagine) is linked at Asn-42. The Nucleophile role is filled by Ser-54. Active-site residues include Asp-358 and His-361.

The protein belongs to the 'GDSL' lipolytic enzyme family.

It is found in the secreted. This chain is GDSL esterase/lipase EXL2 (EXL2), found in Arabidopsis thaliana (Mouse-ear cress).